The chain runs to 601 residues: Putative purine permease C1399.01c (601 aa).

Helical transmembrane passes span 64 to 84 (VPVL…VGGV), 102 to 122 (TNYL…IQIA), 131 to 151 (YYIG…VSVA), 179 to 199 (YGAF…MSFI), 207 to 227 (LFPP…LISS), 264 to 284 (GWGS…IIII), 294 to 314 (TTSV…TGYW), 337 to 357 (IYGP…MEAI), 424 to 444 (FFCA…AVFV), 450 to 470 (VLGG…IAII), 481 to 501 (FILT…DWFT), and 522 to 542 (LVME…NLIL).

This sequence belongs to the nucleobase:cation symporter-2 (NCS2) (TC 2.A.40) family.

It is found in the vacuole membrane. The polypeptide is Putative purine permease C1399.01c (Schizosaccharomyces pombe (strain 972 / ATCC 24843) (Fission yeast)).